Reading from the N-terminus, the 217-residue chain is Octanoyltransferase (217 aa).

Residues 32–207 (DDSADEIWLV…HMIKKLNATQ (176 aa)) enclose the BPL/LPL catalytic domain. Substrate-binding positions include 71–78 (RGGQVTYH), 138–140 (SLG), and 151–153 (GLA). The Acyl-thioester intermediate role is filled by cysteine 169.

Belongs to the LipB family.

The protein localises to the cytoplasm. It catalyses the reaction octanoyl-[ACP] + L-lysyl-[protein] = N(6)-octanoyl-L-lysyl-[protein] + holo-[ACP] + H(+). It functions in the pathway protein modification; protein lipoylation via endogenous pathway; protein N(6)-(lipoyl)lysine from octanoyl-[acyl-carrier-protein]: step 1/2. Its function is as follows. Catalyzes the transfer of endogenously produced octanoic acid from octanoyl-acyl-carrier-protein onto the lipoyl domains of lipoate-dependent enzymes. Lipoyl-ACP can also act as a substrate although octanoyl-ACP is likely to be the physiological substrate. This Pseudoalteromonas translucida (strain TAC 125) protein is Octanoyltransferase.